Consider the following 333-residue polypeptide: Serine racemase (333 aa).

E13 contributes to the Mg(2+) binding site. ATP is bound by residues S31, S32, I33, K51, and T52. Residue K56 is the Proton acceptor of the active site. Position 56 is an N6-(pyridoxal phosphate)lysine (K56). Residue P69 coordinates Ca(2+). The residue at position 71 (T71) is a Phosphothreonine. T81 is a Ca(2+) binding site. Residue S84 is the Proton acceptor of the active site. N86 serves as a coordination point for pyridoxal 5'-phosphate. Q89 contributes to the ATP binding site. C113 carries the post-translational modification S-nitrosocysteine. Residue Y121 participates in ATP binding. N154 is a pyridoxal 5'-phosphate binding site. A Mg(2+)-binding site is contributed by D178. Pyridoxal 5'-phosphate is bound by residues G185, G186, G187, G188, and M189. Residues E210, A214, D216, and N247 each contribute to the Mg(2+) site. Ca(2+) is bound by residues E210, A214, D216, and N247. Residues E210, A214, and D216 each contribute to the Mn(2+) site. Residue K279 coordinates ATP. S313 is a binding site for pyridoxal 5'-phosphate. Residue N316 coordinates ATP.

It belongs to the serine/threonine dehydratase family. Homodimer. The cofactor is Mg(2+). Mn(2+) is required as a cofactor. Ca(2+) serves as cofactor. It depends on pyridoxal 5'-phosphate as a cofactor. In terms of processing, S-nitrosylated, leading to decrease the enzyme activity. Expressed in the cerebellum and frontal cortex (at protein level).

It carries out the reaction L-serine = D-serine. It catalyses the reaction D-serine = pyruvate + NH4(+). The catalysed reaction is L-serine = pyruvate + NH4(+). Its activity is regulated as follows. Allosterically activated by magnesium, and possibly also other divalent metal cations. Allosterically activated by ATP, ADP or GTP. Competitively inhibited by malonate. In terms of biological role, catalyzes the synthesis of D-serine from L-serine. D-serine is a key coagonist with glutamate at NMDA receptors. Has dehydratase activity towards both L-serine and D-serine. The chain is Serine racemase (Srr) from Rattus norvegicus (Rat).